A 443-amino-acid polypeptide reads, in one-letter code: Probable glycine dehydrogenase (decarboxylating) subunit 1 (443 aa).

Belongs to the GcvP family. N-terminal subunit subfamily. As to quaternary structure, the glycine cleavage system is composed of four proteins: P, T, L and H. In this organism, the P 'protein' is a heterodimer of two subunits.

It catalyses the reaction N(6)-[(R)-lipoyl]-L-lysyl-[glycine-cleavage complex H protein] + glycine + H(+) = N(6)-[(R)-S(8)-aminomethyldihydrolipoyl]-L-lysyl-[glycine-cleavage complex H protein] + CO2. Its function is as follows. The glycine cleavage system catalyzes the degradation of glycine. The P protein binds the alpha-amino group of glycine through its pyridoxal phosphate cofactor; CO(2) is released and the remaining methylamine moiety is then transferred to the lipoamide cofactor of the H protein. The protein is Probable glycine dehydrogenase (decarboxylating) subunit 1 of Desulfovibrio desulfuricans (strain ATCC 27774 / DSM 6949 / MB).